Consider the following 164-residue polypeptide: Large ribosomal subunit protein eL24z (164 aa).

A compositionally biased stretch (basic and acidic residues) spans 117–133; it reads ERIKKTKDEKKAKKVEY. Residues 117–164 are disordered; the sequence is ERIKKTKDEKKAKKVEYASKQQKSQVKGNIPKSAAPKAAKMGGGGGRR.

This sequence belongs to the eukaryotic ribosomal protein eL24 family. In terms of assembly, interacts with the cauliflower mosaic virus transactivator TAV to form a TAV/60S complex. Interacts with REIL1 AND REIL2.

In terms of biological role, might have an extraribosomal function in reinitiation of translation. The polypeptide is Large ribosomal subunit protein eL24z (RPL24A) (Arabidopsis thaliana (Mouse-ear cress)).